A 534-amino-acid polypeptide reads, in one-letter code: DNA-directed RNA polymerase III subunit RPC3 (534 aa).

The disordered stretch occupies residues 161-181 (PSVPTTENSDPGPPPPAPTLV). Ser194 is modified (phosphoserine). Positions 197–228 (GKGKRRRSSDEDAAGEPKAKRPKYTTDNKEPI) are disordered. Residues 211-228 (GEPKAKRPKYTTDNKEPI) are compositionally biased toward basic and acidic residues.

The protein belongs to the eukaryotic RPC3/POLR3C RNA polymerase subunit family. As to quaternary structure, component of the RNA polymerase III complex consisting of 17 subunits: a ten-subunit horseshoe-shaped catalytic core composed of POLR3A/RPC1, POLR3B/RPC2, POLR1C/RPAC1, POLR1D/RPAC2, POLR3K/RPC10, POLR2E/RPABC1, POLR2F/RPABC2, POLR2H/RPABC3, POLR2K/RPABC4 and POLR2L/RPABC5; a mobile stalk composed of two subunits POLR3H/RPC8 and CRCP/RPC9, protruding from the core and functioning primarily in transcription initiation; and additional subunits homologous to general transcription factors of the RNA polymerase II machinery, POLR3C/RPC3-POLR3F/RPC6-POLR3G/RPC7 heterotrimer required for transcription initiation and POLR3D/RPC4-POLR3E/RPC5 heterodimer involved in both transcription initiation and termination. Directly interacts with POLR3G/RPC7 and POLR3GL. Directly interacts with POLR3F/RPC6. Interacts with GTF3C4. As part of the RNA polymerase III complex, interacts with PKP2.

It localises to the nucleus. In terms of biological role, DNA-dependent RNA polymerase catalyzes the transcription of DNA into RNA using the four ribonucleoside triphosphates as substrates. Specific peripheric component of RNA polymerase III (Pol III) which synthesizes small non-coding RNAs including 5S rRNA, snRNAs, tRNAs and miRNAs from at least 500 distinct genomic loci. Part of POLR3C/RPC3-POLR3F/RPC6-POLR3G/RPC7 heterotrimer, coordinates the dynamics of Pol III stalk and clamp modules during the transition from apo to elongation state. Pol III plays a key role in sensing and limiting infection by intracellular bacteria and DNA viruses. Acts as a nuclear and cytosolic DNA sensor involved in innate immune response. Can sense non-self dsDNA that serves as template for transcription into dsRNA. The non-self RNA polymerase III transcripts, such as Epstein-Barr virus-encoded RNAs (EBERs) induce type I interferon and NF-kappa-B through the RIG-I pathway. Preferentially binds single-stranded DNA (ssDNA) in a sequence-independent manner. The chain is DNA-directed RNA polymerase III subunit RPC3 from Homo sapiens (Human).